We begin with the raw amino-acid sequence, 160 residues long: uncharacterized protein (160 aa).

Over residues 1-31 (METEKPNTDVKVAQDLEKLKLDEKHKDEKKD) the composition is skewed to basic and acidic residues. The segment at 1 to 160 (METEKPNTDV…DKKDKEHKKE (160 aa)) is disordered. A coiled-coil region spans residues 20-111 (KLDEKHKDEK…KSKLEGKKDK (92 aa)). Basic residues predominate over residues 32–42 (KKDKKDKKDKK). The span at 43–160 (DKKEKTPEEI…DKKDKEHKKE (118 aa)) shows a compositional bias: basic and acidic residues.

This is an uncharacterized protein from Dictyostelium discoideum (Social amoeba).